The primary structure comprises 831 residues: Probable DNA-directed RNA polymerase (831 aa).

Active-site residues include D490, K560, and D738.

It belongs to the phage and mitochondrial RNA polymerase family.

It is found in the mitochondrion. The catalysed reaction is RNA(n) + a ribonucleoside 5'-triphosphate = RNA(n+1) + diphosphate. DNA-dependent RNA polymerase catalyzes the transcription of DNA into RNA using the four ribonucleoside triphosphates as substrates. This Gelasinospora sp. (strain G114) protein is Probable DNA-directed RNA polymerase.